The primary structure comprises 656 residues: Mucin-20 (656 aa).

An N-terminal signal peptide occupies residues 1–21; the sequence is MGSVWGLAVPLLVFCWKVGVS. 3 stretches are compositionally biased toward polar residues: residues 85-96, 114-125, and 159-170; these read ATSISSEVNSRD, PAASSLEAQTTS, and TTSPAPSFLDTQ. 3 disordered regions span residues 85-125, 159-232, and 329-348; these read ATSI…QTTS, TTSP…TQTI, and YLSS…LSSS. The span at 171 to 227 shows a compositional bias: low complexity; that stretch reads TTSPEPSSLTTSPAPSSLITSPTPSSLTTSPAPSFLDTQTTSPAPSSLTTSPAPSSL. Tandem repeats lie at residues 180 to 188, 189 to 197, 198 to 206, 210 to 218, and 219 to 227. The approximate repeats stretch occupies residues 180–227; it reads TTSPAPSSLITSPTPSSLTTSPAPSFLDTQTTSPAPSSLTTSPAPSSL. N-linked (GlcNAc...) asparagine glycosylation is found at Asn366 and Asn570. Residues 399–603 are involved in oligomerization; it reads TAALFTSEIL…WIRKTTKHDP (205 aa). The segment covering 560 to 573 has biased composition (polar residues); the sequence is STTASTSKNPNITL. A disordered region spans residues 560-592; the sequence is STTASTSKNPNITLTKTTASPKPPTHPTTSAST. Residues 604 to 656 form an interaction with MET region; sequence GEDGGFLLVRLTVASPKDLTEHNAREKLMNQLRRELHARMPLVHMSFLSIRRG.

Interacts with MET; oligomerization increases affinity for MET. As to expression, highly expressed in kidney. Up-regulated in renal tissues during renal injury.

The protein resides in the secreted. The protein localises to the apical cell membrane. It localises to the basolateral cell membrane. Its subcellular location is the cell projection. It is found in the microvillus membrane. Functionally, may regulate MET signaling cascade. Seems to decrease hepatocyte growth factor (HGF)-induced transient MAPK activation. Blocks GRB2 recruitment to MET thus suppressing the GRB2-RAS pathway. Inhibits HGF-induced proliferation of MMP1 and MMP9 expression. The polypeptide is Mucin-20 (Muc20) (Mus musculus (Mouse)).